A 787-amino-acid chain; its full sequence is MAPVGAALWRSLRAHQVYGANTDVGKTIVSTFLCNAVNRLKNQGKSAFLKPVSTGPLDEADDRHLQRHAPNTLTKCLYQFDEPVSPHIAAKTFAIPRDDEILSSVHRTLSDWANDGVGFALVETAGGVHSPGPNGNSQADLYRPLRLPIILVADSRLGGISSSISAYESLLLRGYDVHSVLLFKDDYYQNHEYLGNYFRGKSIPLVPVPAPPRRPQEQDPDSRARDLEALDKYYSSVTKSTDVVSLLDELVLKNKQRVEYLDEMASRAQKTIWYPFTQHHGMAAKDITPIDSAYDDFFQTYVTADRSAQQGRLQATFDGSASWWTQGLGHGNPGLALSAAYAAGRYGHVMFPGNIHEPALALAESLLKTVDNPRLQKVFYTDNGSTGMEVALKMGLRAACDRYGWDASKEQINILGLKGSYHGDTIGVMDCSEPSTYNQRVEWYRGRGHWFDFPLVKMSQGVWQVEVPATLQASLGGNQQFSSLDAVFDVESRVRSDAGQRYRKYILETIERLVTQEGKKFGALIMEPIILGAGGMLFCDPLFQRCLADVVRGNPQLFNRGRLTEPQPQTDLSWSGLPVIFDEVFTGLYRLGRKSSASFLGVNPDIAVNAKLLTGGLVPLCTTLASNEIFNAFTSPEKRDALLHGHSYTAHAVGCQVALDSLRTMNNMDEDGSWNDFKNDWKQPHAGDTARVWSVWSHKLLHNLSHAESVDGVFAIGSVLSISLKDAEGAGYTSTAAKGLQTRLAAGGPQFNVHSRVLGNVLYLMSSVTSKQETLRTIEGILREALL.

Residue 23-28 (DVGKTI) coordinates ATP. T27 serves as a coordination point for Mg(2+). Substrate is bound at residue T54. Positions 61 and 123 each coordinate Mg(2+). ATP contacts are provided by residues 123–126 (ETAG) and 184–185 (KD). Residue 323-324 (WW) participates in (8S)-8-amino-7-oxononanoate binding. 384-385 (GS) provides a ligand contact to pyridoxal 5'-phosphate. Position 421 (Y421) interacts with (8S)-8-amino-7-oxononanoate. D582 lines the pyridoxal 5'-phosphate pocket. K611 and G645 together coordinate (8S)-8-amino-7-oxononanoate. A pyridoxal 5'-phosphate-binding site is contributed by 646–647 (HS). R756 provides a ligand contact to (8S)-8-amino-7-oxononanoate.

This sequence in the N-terminal section; belongs to the dethiobiotin synthetase family. It in the C-terminal section; belongs to the class-III pyridoxal-phosphate-dependent aminotransferase family. BioA subfamily. As to quaternary structure, homodimer. Requires Mg(2+) as cofactor. It depends on pyridoxal 5'-phosphate as a cofactor.

It localises to the mitochondrion matrix. The enzyme catalyses (7R,8S)-7,8-diammoniononanoate + CO2 + ATP = (4R,5S)-dethiobiotin + ADP + phosphate + 3 H(+). The catalysed reaction is (8S)-8-amino-7-oxononanoate + S-adenosyl-L-methionine = S-adenosyl-4-methylsulfanyl-2-oxobutanoate + (7R,8S)-7,8-diammoniononanoate. It participates in cofactor biosynthesis; biotin biosynthesis; biotin from 7,8-diaminononanoate: step 1/2. It functions in the pathway cofactor biosynthesis; biotin biosynthesis; 7,8-diaminononanoate from 8-amino-7-oxononanoate (SAM route): step 1/1. Bifunctional enzyme; part of the cluster involved in the biosynthesis of biotin (also known as vitamin B8 or vitamin H), a water-soluble vitamin that functions as a prosthetic group of many carboxylases, such as acetyl-CoA carboxylase and pyruvate carboxylase. Catalyzes a mechanistically unusual reaction, the ATP-dependent insertion of CO2 between the N7 and N8 nitrogen atoms of 7,8-diaminopelargonic acid (DAPA) to form an ureido ring. Also catalyzes the transfer of the alpha-amino group from S-adenosyl-L-methionine (SAM) to 7-keto-8-aminopelargonic acid (KAPA) to form 7,8-diaminopelargonic acid (DAPA). It is the only animotransferase known to utilize SAM as an amino donor. In Emericella nidulans (strain FGSC A4 / ATCC 38163 / CBS 112.46 / NRRL 194 / M139) (Aspergillus nidulans), this protein is Bifunctional dethiobiotin synthetase/adenosylmethionine-8-amino-7-oxononanoate aminotransferase.